The chain runs to 55 residues: Large ribosomal subunit protein bL33c (55 aa).

This sequence belongs to the bacterial ribosomal protein bL33 family.

It is found in the plastid. The protein localises to the chloroplast. The polypeptide is Large ribosomal subunit protein bL33c (Emiliania huxleyi (Coccolithophore)).